The primary structure comprises 374 residues: UPF0674 endoplasmic reticulum membrane protein C2G5.01 (374 aa).

A helical transmembrane segment spans residues 49 to 68 (FRLEFVILACFFLYVFSFIT). An N-linked (GlcNAc...) asparagine glycan is attached at Asn-287. A disordered region spans residues 335–374 (KAAKKKVKSSGDISKLSESDQKKRMERERQRKMRRRAKKM). Basic and acidic residues predominate over residues 349-363 (KLSESDQKKRMERER). Over residues 364–374 (QRKMRRRAKKM) the composition is skewed to basic residues.

This sequence belongs to the UPF0674 family.

It is found in the endoplasmic reticulum membrane. The chain is UPF0674 endoplasmic reticulum membrane protein C2G5.01 from Schizosaccharomyces pombe (strain 972 / ATCC 24843) (Fission yeast).